The sequence spans 259 residues: MNWLEAFILGIIQGLTEFLPISSTGHLYLGRHLFQLDEAGLFLDTMLHIGTLLAVFIYYKKEFIYLIKNPFSKLMLLLIVGTIPAVVIGLLFKDFFEDISKTGITIGWEFLVTGFFLYMADKQKNGRKKMDDITYKDAFIIGSFQAAAIFPAISRSGMTIVAALWRKLDRETAAYFSFLLSTPAIVGAIILQFVDVFQGKAESISSTSLIVGTLSAAFFGYIAVSWMIQYLKRHSLKVFAYYVWGLGILILTLQFTDVF.

8 consecutive transmembrane segments (helical) span residues 1–21 (MNWL…FLPI), 39–59 (AGLF…FIYY), 71–91 (FSKL…IGLL), 99–119 (ISKT…FLYM), 133–153 (ITYK…FPAI), 174–194 (AYFS…LQFV), 208–228 (SLIV…SWMI), and 239–259 (FAYY…TDVF).

Belongs to the UppP family.

The protein localises to the cell membrane. It catalyses the reaction di-trans,octa-cis-undecaprenyl diphosphate + H2O = di-trans,octa-cis-undecaprenyl phosphate + phosphate + H(+). Catalyzes the dephosphorylation of undecaprenyl diphosphate (UPP). Confers resistance to bacitracin. The protein is Undecaprenyl-diphosphatase 4 of Bacillus cereus (strain ZK / E33L).